Consider the following 487-residue polypeptide: Glutamyl-tRNA(Gln) amidotransferase subunit A (487 aa).

Catalysis depends on charge relay system residues K77 and S152. The active-site Acyl-ester intermediate is S176.

Belongs to the amidase family. GatA subfamily. Heterotrimer of A, B and C subunits.

The enzyme catalyses L-glutamyl-tRNA(Gln) + L-glutamine + ATP + H2O = L-glutaminyl-tRNA(Gln) + L-glutamate + ADP + phosphate + H(+). Functionally, allows the formation of correctly charged Gln-tRNA(Gln) through the transamidation of misacylated Glu-tRNA(Gln) in organisms which lack glutaminyl-tRNA synthetase. The reaction takes place in the presence of glutamine and ATP through an activated gamma-phospho-Glu-tRNA(Gln). In Lactiplantibacillus plantarum (strain ATCC BAA-793 / NCIMB 8826 / WCFS1) (Lactobacillus plantarum), this protein is Glutamyl-tRNA(Gln) amidotransferase subunit A.